Here is a 360-residue protein sequence, read N- to C-terminus: UDP-N-acetylglucosamine--N-acetylmuramyl-(pentapeptide) pyrophosphoryl-undecaprenol N-acetylglucosamine transferase (360 aa).

Residues 12–14 (TAG), Ser-198, and Gln-289 contribute to the UDP-N-acetyl-alpha-D-glucosamine site.

Belongs to the glycosyltransferase 28 family. MurG subfamily.

The protein resides in the cell membrane. It catalyses the reaction Mur2Ac(oyl-L-Ala-gamma-D-Glu-L-Lys-D-Ala-D-Ala)-di-trans,octa-cis-undecaprenyl diphosphate + UDP-N-acetyl-alpha-D-glucosamine = beta-D-GlcNAc-(1-&gt;4)-Mur2Ac(oyl-L-Ala-gamma-D-Glu-L-Lys-D-Ala-D-Ala)-di-trans,octa-cis-undecaprenyl diphosphate + UDP + H(+). The protein operates within cell wall biogenesis; peptidoglycan biosynthesis. Functionally, cell wall formation. Catalyzes the transfer of a GlcNAc subunit on undecaprenyl-pyrophosphoryl-MurNAc-pentapeptide (lipid intermediate I) to form undecaprenyl-pyrophosphoryl-MurNAc-(pentapeptide)GlcNAc (lipid intermediate II). The sequence is that of UDP-N-acetylglucosamine--N-acetylmuramyl-(pentapeptide) pyrophosphoryl-undecaprenol N-acetylglucosamine transferase from Streptococcus equi subsp. zooepidemicus (strain H70).